We begin with the raw amino-acid sequence, 446 residues long: FAD-dependent monooxygenase eupB (446 aa).

Residues 10–30 (EPHIAIVGGGIVGVILTLGLL) traverse the membrane as a helical segment. An N-linked (GlcNAc...) asparagine glycan is attached at N33. FAD is bound by residues E40, A53, and R125. Catalysis depends on residues R206 and Y239. N-linked (GlcNAc...) asparagine glycosylation is present at N243. 2 residues coordinate FAD: D322 and A335. A glycan (N-linked (GlcNAc...) asparagine) is linked at N395.

This sequence belongs to the paxM FAD-dependent monooxygenase family. Requires FAD as cofactor.

It localises to the membrane. It participates in secondary metabolite biosynthesis; terpenoid biosynthesis. Functionally, FAD-dependent monooxygenase; part of the gene cluster that mediates the biosynthesis of eupenifeldin, a bistropolone meroterpenoid that acts as an antitumor agent. The first step of eupenifeldin biosynthesis is the biosynthesis of 3-methylorcinaldehyde performed by the non-reducing polyketide synthase eupA. Oxidative dearomatization of 3-methylorcinaldehyde likely catalyzed by the FAD-dependent monooxygenase eupB is followed by oxidative ring expansion by the 2-oxoglutarate-dependent dioxygenase eupC to provide the first tropolone metabolite, tropolone stipitaldehyde. In parallel, generation of sesquiterpene alpha-humulene from farnesylpyrophosphate (FPP) is catalyzed by the terpene cyclase eupE. The cytochrome P450 monooxygenase eupD then hydroxylates humulene to humulenol. The putative Diels-Alderase eupF probably catalyzes the formation of the tropolone-humulene skeleton by linking humulenol and the polyketide moiety. The short-chain dehydrogenase/reductase eupG and the flavin-dependent monooxygenase eupH are also essential for eupenifeldin biosynthesis and are likely the additional decorating enzymes of the tropolone-humulene skeleton to produce final eupenifeldin or derivatives. The polypeptide is FAD-dependent monooxygenase eupB (Phoma sp).